The following is a 189-amino-acid chain: MATYSTNEFKSGLKVMLDGDPCSIVENEFVKPGKGQAFNRVKMKNLKSGRVWERTFKSGESLEGADVVDRDMQYLYNDGEFWHFMEPESFEQFQGDASVVGDSAKWLNEQDTVVVTLYNGSPLAVTPPNHVELEIVETDPGLKGDTAQGGTKPATLSTGAVVKVPLFLSTGETVRVDTRTGEYLGRANK.

The residue at position 34 (K34) is an N6-(3,6-diaminohexanoyl)-5-hydroxylysine.

It belongs to the elongation factor P family. Post-translationally, may be beta-lysylated on the epsilon-amino group of Lys-34 by the combined action of EpmA and EpmB, and then hydroxylated on the C5 position of the same residue by EpmC (if this protein is present). Lysylation is critical for the stimulatory effect of EF-P on peptide-bond formation. The lysylation moiety may extend toward the peptidyltransferase center and stabilize the terminal 3-CCA end of the tRNA. Hydroxylation of the C5 position on Lys-34 may allow additional potential stabilizing hydrogen-bond interactions with the P-tRNA.

It is found in the cytoplasm. Its pathway is protein biosynthesis; polypeptide chain elongation. Its function is as follows. Involved in peptide bond synthesis. Alleviates ribosome stalling that occurs when 3 or more consecutive Pro residues or the sequence PPG is present in a protein, possibly by augmenting the peptidyl transferase activity of the ribosome. Modification of Lys-34 is required for alleviation. This Teredinibacter turnerae (strain ATCC 39867 / T7901) protein is Elongation factor P.